The following is a 463-amino-acid chain: Interstitial collagenase B (463 aa).

The N-terminal stretch at M1 to S17 is a signal peptide. Residues F18–P96 constitute a propeptide, activation peptide. Positions P87–V94 match the Cysteine switch motif. Position 89 (C89) interacts with Zn(2+). A metalloprotease region spans residues A95–D273. Residue D155 participates in Ca(2+) binding. Zn(2+) contacts are provided by H165 and D167. Ca(2+)-binding residues include D172 and G173. H180 is a binding site for Zn(2+). Residues G187 and G189 each coordinate Ca(2+). H193 is a Zn(2+) binding site. Position 195 (D195) interacts with Ca(2+). H215 contacts Zn(2+). E216 is a catalytic residue. Zn(2+)-binding residues include H219 and H225. C275 and C463 are disulfide-bonded. Hemopexin repeat units follow at residues G278 to L321 and P322 to P368. D282 lines the Ca(2+) pocket. An N-linked (GlcNAc...) asparagine glycan is attached at N370. Hemopexin repeat units lie at residues V371–I419 and D420–C463. Residues D375 and D424 each coordinate Ca(2+).

Belongs to the peptidase M10A family. Requires Ca(2+) as cofactor. Zn(2+) is required as a cofactor.

It is found in the secreted. It localises to the extracellular space. Its subcellular location is the extracellular matrix. The enzyme catalyses Cleavage of the triple helix of collagen at about three-quarters of the length of the molecule from the N-terminus, at 775-Gly-|-Ile-776 in the alpha1(I) chain. Cleaves synthetic substrates and alpha-macroglobulins at bonds where P1' is a hydrophobic residue.. With respect to regulation, can be activated without removal of the activation peptide. This Mus musculus (Mouse) protein is Interstitial collagenase B (Mmp1b).